The chain runs to 252 residues: Glucosamine-6-phosphate deaminase (252 aa).

Catalysis depends on aspartate 64, which acts as the Proton acceptor; for enolization step. Asparagine 130 (for ring-opening step) is an active-site residue. The active-site Proton acceptor; for ring-opening step is histidine 132. Glutamate 137 (for ring-opening step) is an active-site residue.

It belongs to the glucosamine/galactosamine-6-phosphate isomerase family. NagB subfamily.

It carries out the reaction alpha-D-glucosamine 6-phosphate + H2O = beta-D-fructose 6-phosphate + NH4(+). The protein operates within amino-sugar metabolism; N-acetylneuraminate degradation; D-fructose 6-phosphate from N-acetylneuraminate: step 5/5. Its function is as follows. Catalyzes the reversible isomerization-deamination of glucosamine 6-phosphate (GlcN6P) to form fructose 6-phosphate (Fru6P) and ammonium ion. The sequence is that of Glucosamine-6-phosphate deaminase from Exiguobacterium sibiricum (strain DSM 17290 / CCUG 55495 / CIP 109462 / JCM 13490 / 255-15).